The following is a 372-amino-acid chain: L-lysine 4-hydroxylase (372 aa).

His176, Glu178, and His312 together coordinate Fe cation.

Belongs to the clavaminate synthase family. The cofactor is Fe(2+).

It catalyses the reaction L-lysine + 2-oxoglutarate + O2 = (4R)-4-hydroxy-L-lysine + succinate + CO2. Alpha-ketoglutarate-dependent dioxygenase that in vitro catalyzes the regio- and stereoselective hydroxylation of L-lysine, leading to (4R)-4-hydroxy-L-lysine. This chain is L-lysine 4-hydroxylase, found in Flavobacterium sp. (strain CF136).